The sequence spans 138 residues: Small ribosomal subunit protein uS11c (138 aa).

A disordered region spans residues 1 to 23; that stretch reads MAKPILRIGSRKNTRSSSRKNVR. Residues 9-23 are compositionally biased toward basic residues; that stretch reads GSRKNTRSSSRKNVR.

It belongs to the universal ribosomal protein uS11 family. As to quaternary structure, part of the 30S ribosomal subunit.

It localises to the plastid. The protein localises to the chloroplast. This chain is Small ribosomal subunit protein uS11c, found in Nasturtium officinale (Watercress).